The following is a 215-amino-acid chain: MRAFTTHTGLVAPMDRANVDTDLIIPKQFLKSIKRTGFGPNAFDELRYLDKGEPGQDNSSRPLNPEFPLNHARYQGASVLLARKNFGCGSSREHAPWALEEFGFRAIIAPSFADIFYNNCFKNGLLPIVLDEAVVDSLFAAMYSEEGFQIEIDLQAQTVTSAGQTYTFDVDEFRKHCLLNGFDDISLTLLDAEKIQTYEAQRRQSQPWLFNAVHQ.

Belongs to the LeuD family. LeuD type 1 subfamily. In terms of assembly, heterodimer of LeuC and LeuD.

It carries out the reaction (2R,3S)-3-isopropylmalate = (2S)-2-isopropylmalate. It functions in the pathway amino-acid biosynthesis; L-leucine biosynthesis; L-leucine from 3-methyl-2-oxobutanoate: step 2/4. Catalyzes the isomerization between 2-isopropylmalate and 3-isopropylmalate, via the formation of 2-isopropylmaleate. This Teredinibacter turnerae (strain ATCC 39867 / T7901) protein is 3-isopropylmalate dehydratase small subunit.